We begin with the raw amino-acid sequence, 220 residues long: UPF0319 protein Ent638_1476 (220 aa).

A signal peptide spans 1 to 20; that stretch reads MKTGIVSAVLALVMPVCVYA.

This sequence belongs to the UPF0319 family.

The polypeptide is UPF0319 protein Ent638_1476 (Enterobacter sp. (strain 638)).